Consider the following 165-residue polypeptide: Cyclic pyranopterin monophosphate synthase (165 aa).

Residues 75 to 77 (MCH) and 115 to 116 (ME) contribute to the substrate site. D130 is an active-site residue.

The protein belongs to the MoaC family. As to quaternary structure, homohexamer; trimer of dimers.

It catalyses the reaction (8S)-3',8-cyclo-7,8-dihydroguanosine 5'-triphosphate = cyclic pyranopterin phosphate + diphosphate. It functions in the pathway cofactor biosynthesis; molybdopterin biosynthesis. Catalyzes the conversion of (8S)-3',8-cyclo-7,8-dihydroguanosine 5'-triphosphate to cyclic pyranopterin monophosphate (cPMP). In Halalkalibacterium halodurans (strain ATCC BAA-125 / DSM 18197 / FERM 7344 / JCM 9153 / C-125) (Bacillus halodurans), this protein is Cyclic pyranopterin monophosphate synthase.